We begin with the raw amino-acid sequence, 129 residues long: D-ribose pyranase (129 aa).

Catalysis depends on histidine 20, which acts as the Proton donor. Residues aspartate 28, histidine 96, and 118 to 120 (YAN) contribute to the substrate site.

Belongs to the RbsD / FucU family. RbsD subfamily. In terms of assembly, homodecamer.

The protein resides in the cytoplasm. The enzyme catalyses beta-D-ribopyranose = beta-D-ribofuranose. Its pathway is carbohydrate metabolism; D-ribose degradation; D-ribose 5-phosphate from beta-D-ribopyranose: step 1/2. Its function is as follows. Catalyzes the interconversion of beta-pyran and beta-furan forms of D-ribose. This is D-ribose pyranase from Streptomyces coelicolor (strain ATCC BAA-471 / A3(2) / M145).